Consider the following 207-residue polypeptide: MPKSYFITGIGTEVGKTVVSAIVAEALKADYWKPIQAGDLENSDSHKVKKLVSNKDSVFFKNACALNTPMSPHAAAEIDGIKLQIKNIKRPETEKDLVIEGAGGLMVPLNAKEVIADLISKEDLVILVSRHYLGSINHTLLSIEALKSRGIDKIGIIFSGDEHPTTEAAIKKLGKVKVVGRIEEEPYFDEMVVKEYAEKFRKRLCEI.

Residue 13 to 18 (EVGKTV) participates in ATP binding. T17 contacts Mg(2+). Residue K33 is part of the active site. ATP-binding positions include D44 and 100–103 (EGAG). Residues D44 and E100 each coordinate Mg(2+).

The protein belongs to the dethiobiotin synthetase family. In terms of assembly, homodimer. Mg(2+) serves as cofactor.

The protein localises to the cytoplasm. The catalysed reaction is (7R,8S)-7,8-diammoniononanoate + CO2 + ATP = (4R,5S)-dethiobiotin + ADP + phosphate + 3 H(+). The protein operates within cofactor biosynthesis; biotin biosynthesis; biotin from 7,8-diaminononanoate: step 1/2. Catalyzes a mechanistically unusual reaction, the ATP-dependent insertion of CO2 between the N7 and N8 nitrogen atoms of 7,8-diaminopelargonic acid (DAPA, also called 7,8-diammoniononanoate) to form a ureido ring. This Christiangramia forsetii (strain DSM 17595 / CGMCC 1.15422 / KT0803) (Gramella forsetii) protein is ATP-dependent dethiobiotin synthetase BioD.